Consider the following 357-residue polypeptide: Hyaluronidase (357 aa).

The signal sequence occupies residues 1–26; that stretch reads MLLVTLFLFFLQALVNGDSCGSNCEK. Cystine bridges form between cysteine 45/cysteine 334 and cysteine 211/cysteine 223. Residues asparagine 105 and asparagine 125 are each glycosylated (N-linked (GlcNAc...) asparagine). Glutamate 135 functions as the Proton donor in the catalytic mechanism. A glycan (N-linked (GlcNAc...) asparagine) is linked at asparagine 153. Asparagine 351 is a glycosylation site (N-linked (GlcNAc...) asparagine).

It belongs to the glycosyl hydrolase 56 family.

Its subcellular location is the secreted. It catalyses the reaction Random hydrolysis of (1-&gt;4)-linkages between N-acetyl-beta-D-glucosamine and D-glucuronate residues in hyaluronate.. Functionally, hydrolyzes high molecular weight hyaluronic acid to produce small oligosaccharides. The protein is Hyaluronidase of Vespa magnifica (Hornet).